Here is a 128-residue protein sequence, read N- to C-terminus: Putative protein SEM1, isoform 2 (128 aa).

The segment covering 22-32 has biased composition (basic residues); it reads KHGIKRGRRPS. Residues 22 to 42 are disordered; that stretch reads KHGIKRGRRPSIRSPAQRARG.

This chain is Putative protein SEM1, isoform 2, found in Homo sapiens (Human).